Reading from the N-terminus, the 325-residue chain is Histone deacetylase 8 (325 aa).

The tract at residues 1–272 (MSRVVKPKVA…WTYLTALIVG (272 aa)) is histone deacetylase. Asp-49 provides a ligand contact to substrate. His-91 functions as the Proton acceptor in the catalytic mechanism. A substrate-binding site is contributed by Gly-99. Asp-126, His-128, and Asp-215 together coordinate a divalent metal cation. Tyr-254 is a binding site for substrate.

Belongs to the histone deacetylase family. HD type 1 subfamily. Requires a divalent metal cation as cofactor.

It is found in the nucleus. The protein resides in the chromosome. Its subcellular location is the cytoplasm. The catalysed reaction is N(6)-acetyl-L-lysyl-[histone] + H2O = L-lysyl-[histone] + acetate. The enzyme catalyses N(6)-acetyl-L-lysyl-[protein] + H2O = L-lysyl-[protein] + acetate. It catalyses the reaction N(6)-(2E)-butenoyl-L-lysyl-[protein] + H2O = (2E)-2-butenoate + L-lysyl-[protein]. Its activity is regulated as follows. Its activity is inhibited by trichostatin A (TSA) and butyrate, 2 well known histone deacetylase inhibitors. Its function is as follows. Histone deacetylase that catalyzes the deacetylation of lysine residues on the N-terminal part of the core histones (H2A, H2B, H3 and H4). Histone deacetylation gives a tag for epigenetic repression and plays an important role in transcriptional regulation, cell cycle progression and developmental events. Histone deacetylases act via the formation of large multiprotein complexes. Also involved in the deacetylation of non-histone proteins. In addition to protein deacetylase activity, also has protein-lysine deacylase activity: acts as a protein decrotonylase by mediating decrotonylation ((2E)-butenoyl) of histones. The protein is Histone deacetylase 8 (hdac8) of Xenopus laevis (African clawed frog).